We begin with the raw amino-acid sequence, 505 residues long: Alkylglycerol monooxygenase (505 aa).

A run of 2 helical transmembrane segments spans residues 56–76 and 104–124; these read VSAW…ISGH and AVAI…ELPW. Residues 130-262 form the Fatty acid hydroxylase domain; sequence WIFCLFFQDF…FIIWDKMFNT (133 aa). Residues 145-149 carry the Histidine box-1 motif; sequence HRAVH. The Histidine box-2 motif lies at 158–162; that stretch reads HTIHH. A Histidine box-3 motif is present at residues 234–238; it reads HRVHH. 4 helical membrane passes run 366 to 386, 396 to 416, 430 to 450, and 452 to 472; these read ILVK…FFHF, LDCT…GAFF, CCGV…AGTH, and LFVI…VLVE.

The protein belongs to the sterol desaturase family. TMEM195 subfamily. Requires Fe cation as cofactor.

It is found in the endoplasmic reticulum membrane. The enzyme catalyses 1-O-(1,2-saturated-alkyl)-sn-glycerol + (6R)-L-erythro-5,6,7,8-tetrahydrobiopterin + O2 = a 1-(1-hydroxyalkyl)-sn-glycerol + (6R)-L-erythro-6,7-dihydrobiopterin + H2O. In terms of biological role, glyceryl-ether monooxygenase that cleaves the O-alkyl bond of ether lipids. The sequence is that of Alkylglycerol monooxygenase from Caenorhabditis elegans.